Reading from the N-terminus, the 686-residue chain is CAI-1 autoinducer sensor kinase/phosphatase CqsS (686 aa).

Helical transmembrane passes span 21-41 (LVGW…EYWF), 47-64 (NLGL…LVFR), 77-97 (GYFL…MMLM), 100-120 (WSTI…LLVH), 124-144 (VMAL…YGLT), and 152-172 (IEWQ…LCFF). The 226-residue stretch at 191 to 416 (GIAHEMRNPL…EFVLSFPRYD (226 aa)) folds into the Histidine kinase domain. His194 is subject to Phosphohistidine; by autocatalysis. Residues 569-686 (RILVVDDNQS…VLLNKVAAWV (118 aa)) form the Response regulatory domain. Position 618 is a 4-aspartylphosphate (Asp618).

It is found in the cell membrane. It catalyses the reaction ATP + protein L-histidine = ADP + protein N-phospho-L-histidine.. Senses the quorum-sensing autoinducer CAI-1 ((S)-3-hydroxytridecan-4-one) which probably functions as an intragenus signal. The sensory signal is then relayed to LuxU and LuxO. The sequence is that of CAI-1 autoinducer sensor kinase/phosphatase CqsS (cqsS) from Vibrio cholerae serotype O1 (strain ATCC 39315 / El Tor Inaba N16961).